The sequence spans 396 residues: Dimethyladenosine transferase 2, mitochondrial (396 aa).

The transit peptide at 1–43 directs the protein to the mitochondrion; sequence MRGPAMRLPPRIALSALARGPSCILGSGAATRKDWQTRNRRGF. Residues 43 to 71 form a disordered region; the sequence is FSDFNIEPLPDSDLEESSPWTSRNRSEPT. S-adenosyl-L-methionine is bound by residues I74, E123, and D149. A DNA-binding region spans residues 328–329; the sequence is KR.

It belongs to the class I-like SAM-binding methyltransferase superfamily. rRNA adenine N(6)-methyltransferase family. KsgA subfamily. Homodimer. Component of the mitochondrial transcription initiation complex, composed at least of TFB2M, TFAM and POLRMT. In this complex TFAM recruits POLRMT to the promoter whereas TFB2M induces structural changes in POLRMT to enable promoter opening and trapping of the DNA non-template strand. Interacts with mitochondrial RNA polymerase POLRMT. Interacts with TFAM. As to expression, ubiquitously expressed.

Its subcellular location is the mitochondrion. It catalyses the reaction adenosine in rRNA + S-adenosyl-L-methionine = N(6)-methyladenosine in rRNA + S-adenosyl-L-homocysteine + H(+). S-adenosyl-L-methionine-dependent rRNA methyltransferase which may methylate two specific adjacent adenosines in the loop of a conserved hairpin near the 3'-end of 12S mitochondrial rRNA. Component of the mitochondrial transcription initiation complex, composed at least of TFB2M, TFAM and POLRMT that is required for basal transcription of mitochondrial DNA. In this complex, TFAM recruits POLRMT to a specific promoter whereas TFB2M induces structural changes in POLRMT to enable promoter opening and trapping of the DNA non-template strand. Stimulates transcription independently of the methyltransferase activity. In Mus musculus (Mouse), this protein is Dimethyladenosine transferase 2, mitochondrial.